Reading from the N-terminus, the 72-residue chain is Large ribosomal subunit protein bL31 (72 aa).

4 residues coordinate Zn(2+): C16, C18, C37, and C40.

This sequence belongs to the bacterial ribosomal protein bL31 family. Type A subfamily. As to quaternary structure, part of the 50S ribosomal subunit. Zn(2+) is required as a cofactor.

Functionally, binds the 23S rRNA. In Idiomarina loihiensis (strain ATCC BAA-735 / DSM 15497 / L2-TR), this protein is Large ribosomal subunit protein bL31.